The chain runs to 85 residues: Large ribosomal subunit protein bL27 (85 aa).

Gly residues predominate over residues 1 to 10; it reads MAQKKGGGST. Residues 1–20 are disordered; sequence MAQKKGGGSTRNGRDSKPKM.

This sequence belongs to the bacterial ribosomal protein bL27 family.

The chain is Large ribosomal subunit protein bL27 from Acidovorax ebreus (strain TPSY) (Diaphorobacter sp. (strain TPSY)).